The chain runs to 104 residues: Cytochrome c-551 (104 aa).

Positions 1-22 (MKKILIPMLALGGALAMQPALA) are cleaved as a signal peptide. Cys34, Cys37, His38, and Met83 together coordinate heme c.

In terms of processing, binds 1 heme c group covalently per subunit.

The protein localises to the periplasm. In terms of biological role, electron donor for cytochrome cd1 in nitrite and nitrate respiration. This is Cytochrome c-551 (nirM) from Stutzerimonas stutzeri (Pseudomonas stutzeri).